Reading from the N-terminus, the 41-residue chain is Chymotrypsin inhibitor (41 aa).

In terms of biological role, inhibits chymotrypsin. This Eisenia hortensis (European nightcrawler) protein is Chymotrypsin inhibitor.